We begin with the raw amino-acid sequence, 241 residues long: Adenosylcobinamide-GDP ribazoletransferase (241 aa).

A run of 5 helical transmembrane segments spans residues 24–44 (IVFF…SIFY), 48–68 (FINQ…IYGF), 103–123 (VVTF…FNSI), 175–195 (VIIL…FSLI), and 218–238 (IIGF…LISF).

This sequence belongs to the CobS family. Requires Mg(2+) as cofactor.

It is found in the cell membrane. It catalyses the reaction alpha-ribazole + adenosylcob(III)inamide-GDP = adenosylcob(III)alamin + GMP + H(+). It carries out the reaction alpha-ribazole 5'-phosphate + adenosylcob(III)inamide-GDP = adenosylcob(III)alamin 5'-phosphate + GMP + H(+). Its pathway is cofactor biosynthesis; adenosylcobalamin biosynthesis; adenosylcobalamin from cob(II)yrinate a,c-diamide: step 7/7. In terms of biological role, joins adenosylcobinamide-GDP and alpha-ribazole to generate adenosylcobalamin (Ado-cobalamin). Also synthesizes adenosylcobalamin 5'-phosphate from adenosylcobinamide-GDP and alpha-ribazole 5'-phosphate. The protein is Adenosylcobinamide-GDP ribazoletransferase of Picrophilus torridus (strain ATCC 700027 / DSM 9790 / JCM 10055 / NBRC 100828 / KAW 2/3).